We begin with the raw amino-acid sequence, 370 residues long: Actin-related protein 2/3 complex subunit 1A (370 aa).

6 WD repeats span residues 6–45 (FLLE…WVKA), 50–89 (EHNG…WKPT), 140–179 (PIRS…VDEK), 202–241 (GTGG…QVST), 244–284 (TEFL…TFVS), and 322–365 (LHQN…SSIQ).

This sequence belongs to the WD repeat ARPC1 family. As to quaternary structure, probable component of the Arp2/3 complex in which it may replace ARPC1B.

It localises to the cytoplasm. Its subcellular location is the cytoskeleton. It is found in the nucleus. Functionally, probably functions as a component of the Arp2/3 complex which is involved in regulation of actin polymerization and together with an activating nucleation-promoting factor (NPF) mediates the formation of branched actin networks. In addition to its role in the cytoplasmic cytoskeleton, the Arp2/3 complex also promotes actin polymerization in the nucleus, thereby regulating gene transcription and repair of damaged DNA. This chain is Actin-related protein 2/3 complex subunit 1A (ARPC1A), found in Bos taurus (Bovine).